The primary structure comprises 968 residues: RNA polymerase-associated protein RapA (968 aa).

A Helicase ATP-binding domain is found at 164-334 (DVGRRHAPRV…FARLRLLDPN (171 aa)). ATP is bound at residue 177–184 (DEVGLGKT). A DEAH box motif is present at residues 280-283 (DEAH). A Helicase C-terminal domain is found at 490-685 (RVEWLMGYLT…ALKAQLEQGR (196 aa)).

It belongs to the SNF2/RAD54 helicase family. RapA subfamily. As to quaternary structure, interacts with the RNAP. Has a higher affinity for the core RNAP than for the holoenzyme. Its ATPase activity is stimulated by binding to RNAP.

Its function is as follows. Transcription regulator that activates transcription by stimulating RNA polymerase (RNAP) recycling in case of stress conditions such as supercoiled DNA or high salt concentrations. Probably acts by releasing the RNAP, when it is trapped or immobilized on tightly supercoiled DNA. Does not activate transcription on linear DNA. Probably not involved in DNA repair. The chain is RNA polymerase-associated protein RapA from Salmonella typhi.